A 207-amino-acid chain; its full sequence is Sodium/potassium-transporting ATPase subunit beta-1-interacting protein 1 (207 aa).

The next 3 helical transmembrane spans lie at 2-22 (GRCS…AAAL), 35-55 (APIL…LGTL), and 62-82 (LILY…IICF). N-linked (GlcNAc...) asparagine glycosylation is present at N100. Residues 147-167 (ALSSALQIFLALFGFVYACYV) form a helical membrane-spanning segment.

Belongs to the NKAIN family. In terms of assembly, interacts with atp1b1 C-terminus.

It is found in the cell membrane. The polypeptide is Sodium/potassium-transporting ATPase subunit beta-1-interacting protein 1 (nkain1) (Xenopus tropicalis (Western clawed frog)).